Reading from the N-terminus, the 80-residue chain is UPF0180 protein GK1051 (80 aa).

The protein belongs to the UPF0180 family.

The protein is UPF0180 protein GK1051 of Geobacillus kaustophilus (strain HTA426).